The primary structure comprises 251 residues: Large ribosomal subunit protein uL16m (251 aa).

The N-terminal 29 residues, 1–29 (MWRLLSGARAPVLRATLSDSWAAPPARAG), are a transit peptide targeting the mitochondrion.

It belongs to the universal ribosomal protein uL16 family. As to quaternary structure, component of the mitochondrial ribosome large subunit (39S) which comprises a 16S rRNA and about 50 distinct proteins.

Its subcellular location is the mitochondrion. This Bos taurus (Bovine) protein is Large ribosomal subunit protein uL16m (MRPL16).